Consider the following 61-residue polypeptide: [Val1,Thr6]-bradykinyl-Val,Asp (61 aa).

The signal sequence occupies residues 1-22; it reads MAFLKKSLFLVLFLGVVSLSFC. Positions 23–48 are excised as a propeptide; sequence EEEEREEHEEEKREAEAAESAENLIS. Positions 27–61 are disordered; it reads REEHEEEKREAEAAESAENLISKRVPPGFTPFRVD.

As to expression, expressed by the skin glands. Expression levels in inguinal glands and granular glands are virtually the same.

The protein resides in the secreted. Induces contraction of rat ileum smooth muscle (EC(50)=2.73 uM) but has no activity towards rat smooth muscle from tail artery, urinary bladder or uterus. Binds to both bradykinin receptor B1 (BDKRB1) and B2 (BDKRB2); the effect via BDKRB1 is stronger. The chain is [Val1,Thr6]-bradykinyl-Val,Asp from Physalaemus nattereri (Cuyaba dwarf frog).